The following is a 276-amino-acid chain: F420-dependent methylenetetrahydromethanopterin dehydrogenase (276 aa).

It belongs to the MTD family.

It carries out the reaction 5,10-methylenetetrahydromethanopterin + oxidized coenzyme F420-(gamma-L-Glu)(n) + 2 H(+) = 5,10-methenyl-5,6,7,8-tetrahydromethanopterin + reduced coenzyme F420-(gamma-L-Glu)(n). It functions in the pathway one-carbon metabolism; methanogenesis from CO(2); 5,10-methylene-5,6,7,8-tetrahydromethanopterin from 5,10-methenyl-5,6,7,8-tetrahydromethanopterin (coenzyme F420 route): step 1/1. Catalyzes the reversible reduction of methenyl-H(4)MPT(+) to methylene-H(4)MPT. The protein is F420-dependent methylenetetrahydromethanopterin dehydrogenase of Methanococcus vannielii (strain ATCC 35089 / DSM 1224 / JCM 13029 / OCM 148 / SB).